A 257-amino-acid polypeptide reads, in one-letter code: Ethanolamine ammonia-lyase small subunit (257 aa).

Residues V153, E174, and C203 each coordinate adenosylcob(III)alamin.

It belongs to the EutC family. As to quaternary structure, the basic unit is a heterodimer which dimerizes to form tetramers. The heterotetramers trimerize; 6 large subunits form a core ring with 6 small subunits projecting outwards. It depends on adenosylcob(III)alamin as a cofactor.

Its subcellular location is the bacterial microcompartment. It carries out the reaction ethanolamine = acetaldehyde + NH4(+). The protein operates within amine and polyamine degradation; ethanolamine degradation. Its function is as follows. Catalyzes the deamination of various vicinal amino-alcohols to oxo compounds. Allows this organism to utilize ethanolamine as the sole source of nitrogen and carbon in the presence of external vitamin B12. This is Ethanolamine ammonia-lyase small subunit from Rhodococcus erythropolis (Arthrobacter picolinophilus).